We begin with the raw amino-acid sequence, 93 residues long: Small ribosomal subunit protein uS19c (93 aa).

Belongs to the universal ribosomal protein uS19 family.

It is found in the plastid. The protein resides in the chloroplast. Protein S19 forms a complex with S13 that binds strongly to the 16S ribosomal RNA. The polypeptide is Small ribosomal subunit protein uS19c (rps19-A) (Zea mays (Maize)).